The following is a 137-amino-acid chain: Nucleoside diphosphate kinase (137 aa).

ATP contacts are provided by lysine 9, phenylalanine 58, arginine 86, threonine 92, arginine 103, and asparagine 113. Catalysis depends on histidine 121, which acts as the Pros-phosphohistidine intermediate.

It belongs to the NDK family. In terms of assembly, homotetramer. Mg(2+) is required as a cofactor.

It localises to the cytoplasm. The enzyme catalyses a 2'-deoxyribonucleoside 5'-diphosphate + ATP = a 2'-deoxyribonucleoside 5'-triphosphate + ADP. The catalysed reaction is a ribonucleoside 5'-diphosphate + ATP = a ribonucleoside 5'-triphosphate + ADP. Functionally, major role in the synthesis of nucleoside triphosphates other than ATP. The ATP gamma phosphate is transferred to the NDP beta phosphate via a ping-pong mechanism, using a phosphorylated active-site intermediate. This Streptococcus pneumoniae (strain Hungary19A-6) protein is Nucleoside diphosphate kinase.